The primary structure comprises 60 residues: Large ribosomal subunit protein bL33 (60 aa).

It belongs to the bacterial ribosomal protein bL33 family.

In Flavobacterium psychrophilum (strain ATCC 49511 / DSM 21280 / CIP 103535 / JIP02/86), this protein is Large ribosomal subunit protein bL33.